The sequence spans 271 residues: Aquaporin-11 (271 aa).

Residues 1–14 are Cytoplasmic-facing; that stretch reads MSALLGLPPEVQDT. Residues 15-35 form a helical membrane-spanning segment; that stretch reads CISLGLMLLVVLFMGLARVIA. Over 36–41 the chain is Lumenal; that stretch reads RQQLHR. The helical transmembrane segment at 42–62 threads the bilayer; that stretch reads PMVHAFVLEFLATFQLCYCTH. Residues 63–76 are Cytoplasmic-facing; that stretch reads ELQLLSEQDSGHPT. The helical transmembrane segment at 77-97 threads the bilayer; that stretch reads WTLTLIYFFSLVHGLTLVGTA. The Lumenal portion of the chain corresponds to 98–166; that stretch reads SNPCGVMMQM…NPINTDISKA (69 aa). Residues 99-101 carry the NPC motif; the sequence is NPC. Residues 167–187 form a helical membrane-spanning segment; the sequence is IIIEAICSFIFHSALLHFQEV. The Cytoplasmic segment spans residues 188–194; the sequence is RTKLRIH. Residues 195-215 traverse the membrane as a helical segment; the sequence is VLAALITFLAYAGGSLTGALF. The short motif at 216–218 is the NPA element; the sequence is NPA. The Lumenal portion of the chain corresponds to 216–234; sequence NPALALSLHFPCFDESFYK. A helical membrane pass occupies residues 235–255; the sequence is FFVVYWVAPSLGVLLMILMFS. Over 256–271 the chain is Cytoplasmic; it reads FFLPWLHNNQLSNKKE.

The protein belongs to the MIP/aquaporin (TC 1.A.8) family. AQP11/AQP12 subfamily. Homodimer; disulfide-linked. Homotetramer. Can also form homomultimer. Not glycosylated. As to expression, expressed in retina specifically at retinal Mueller glial cells. Expressed in adult testis, in the elongated spermatids (ES) and in residual bodies inside Sertoli cells.

The protein localises to the endoplasmic reticulum membrane. It localises to the cytoplasmic vesicle membrane. It is found in the cell membrane. The catalysed reaction is H2O(in) = H2O(out). It carries out the reaction glycerol(in) = glycerol(out). The enzyme catalyses H2O2(out) = H2O2(in). In terms of biological role, channel protein that facilitates the transport of water, glycerol and hydrogen peroxide across membrane of cell or organelles guaranteeing intracellular homeostasis in several organes like liver, kidney and brain. In situation of stress, participates in endoplasmic reticulum (ER) homeostasis by regulating redox homeostasis through the transport of hydrogen peroxide across the endoplasmic reticulum membrane thereby regulating the oxidative stress through the NADPH oxidase 2 pathway. Plays a role by maintaining an environment suitable for translation or protein foldings in the ER lumen namely by participating in the PKD1 glycosylation processing resulting in regulation of PKD1 membrane trafficking thereby preventing the accumulation of unfolding protein in ER. Plays a role in the proximal tubule function by regulating its endosomal acidification. May play a role in postnatal kidney development. In Rattus norvegicus (Rat), this protein is Aquaporin-11.